Reading from the N-terminus, the 231-residue chain is Orotidine 5'-phosphate decarboxylase (231 aa).

Residues Asp11, Lys33, 60 to 69 (DLKFHDIPNT), Thr117, Arg178, Gln187, Gly207, and Arg208 each bind substrate. Lys62 acts as the Proton donor in catalysis.

The protein belongs to the OMP decarboxylase family. Type 1 subfamily. In terms of assembly, homodimer.

It catalyses the reaction orotidine 5'-phosphate + H(+) = UMP + CO2. Its pathway is pyrimidine metabolism; UMP biosynthesis via de novo pathway; UMP from orotate: step 2/2. Its function is as follows. Catalyzes the decarboxylation of orotidine 5'-monophosphate (OMP) to uridine 5'-monophosphate (UMP). The chain is Orotidine 5'-phosphate decarboxylase from Nitrosomonas europaea (strain ATCC 19718 / CIP 103999 / KCTC 2705 / NBRC 14298).